The primary structure comprises 239 residues: Serine protease SplC (239 aa).

The N-terminal stretch at 1-36 (MNKNIVIKSMAALAILTSVTGINAAVVEETQQIANA) is a signal peptide. Catalysis depends on charge relay system residues His-75, Asp-113, and Ser-193.

It belongs to the peptidase S1B family.

Its subcellular location is the secreted. This is Serine protease SplC (splC) from Staphylococcus aureus (strain MW2).